The primary structure comprises 159 residues: Aspartate carbamoyltransferase regulatory chain (159 aa).

Residues cysteine 111, cysteine 116, cysteine 141, and cysteine 144 each coordinate Zn(2+).

This sequence belongs to the PyrI family. As to quaternary structure, contains catalytic and regulatory chains. The cofactor is Zn(2+).

In terms of biological role, involved in allosteric regulation of aspartate carbamoyltransferase. The polypeptide is Aspartate carbamoyltransferase regulatory chain (Aeropyrum pernix (strain ATCC 700893 / DSM 11879 / JCM 9820 / NBRC 100138 / K1)).